The sequence spans 1082 residues: Integrator complex subunit 3 homolog (1082 aa).

Disordered regions lie at residues 483–563 (PGPP…VSDD), 923–945 (YPSN…TAPT), and 1005–1082 (DETS…SDSD). Composition is skewed to low complexity over residues 517 to 528 (PAAKAASTAASA) and 542 to 555 (TKPA…TTTT). Positions 936-945 (KSAQQNTAPT) are enriched in polar residues. Composition is skewed to low complexity over residues 1008–1018 (STTVGRRGTSS) and 1033–1056 (EKAA…ASAK).

Belongs to the Integrator subunit 3 family. Belongs to the multiprotein complex Integrator. The core complex associates with protein phosphatase 2A subunits, to form the Integrator-PP2A (INTAC) complex.

The protein resides in the nucleus. It localises to the cytoplasm. In terms of biological role, component of the integrator complex, a multiprotein complex that terminates RNA polymerase II (Pol II) transcription in the promoter-proximal region of genes. The integrator complex provides a quality checkpoint during transcription elongation by driving premature transcription termination of transcripts that are unfavorably configured for transcriptional elongation: the complex terminates transcription by (1) catalyzing dephosphorylation of the C-terminal domain (CTD) of Pol II subunit Polr2A/Rbp1 and Spt5, and (2) degrading the exiting nascent RNA transcript via endonuclease activity. The integrator complex is also involved in the 3'-end processing of the U7 snRNA, and also the spliceosomal snRNAs U1, U2, U4 and U5. The polypeptide is Integrator complex subunit 3 homolog (Anopheles gambiae (African malaria mosquito)).